The primary structure comprises 136 residues: Peptide methionine sulfoxide reductase MsrB (136 aa).

The 128-residue stretch at 9–136 folds into the MsrB domain; that stretch reads DAEWKALLAE…NSASLDFKKK (128 aa). Zn(2+) contacts are provided by Cys53, Cys56, Cys102, and Cys105. Cys125 acts as the Nucleophile in catalysis.

Belongs to the MsrB Met sulfoxide reductase family. Zn(2+) serves as cofactor.

It carries out the reaction L-methionyl-[protein] + [thioredoxin]-disulfide + H2O = L-methionyl-(R)-S-oxide-[protein] + [thioredoxin]-dithiol. The sequence is that of Peptide methionine sulfoxide reductase MsrB from Variovorax paradoxus (strain S110).